A 908-amino-acid polypeptide reads, in one-letter code: Serine/threonine-protein kinase WARTS homolog (908 aa).

Residues 42–70 (EIRVGRHRAKLDEIRESLKAYEHEAGLLS) are a coiled coil. Low complexity-rich tracts occupy residues 115-125 (VSSAAVSNSNS) and 168-181 (PSTTISSTPSTTTE). Disordered regions lie at residues 115–134 (VSSAAVSNSNSFRTEGGGHK), 162–183 (MIRNGNPSTTISSTPSTTTEES), 203–225 (NNNAPQYSPGYSRPPPPAYDSSP), and 388–412 (KSRAQPPPPQYNQPSEPPPKRVSSP). Residues 392-404 (QPPPPQYNQPSEP) are compositionally biased toward pro residues. A coiled-coil region spans residues 439–470 (YMEQHVERLLQQYKEREKRMKQLEKEMVSAQL). The Protein kinase domain occupies 502 to 807 (FTVISHIGVG…TAQVKNHPWF (306 aa)). ATP is bound by residues 508–516 (IGVGAFGKV) and lysine 531. Aspartate 625 (proton acceptor) is an active-site residue. The AGC-kinase C-terminal domain maps to 808-874 (RGIDWVNLRK…RHFFDTDSVG (67 aa)).

This sequence belongs to the protein kinase superfamily. AGC Ser/Thr protein kinase family. In terms of assembly, interacts (via N-terminus) with yap-1 (via WW domain). Mg(2+) serves as cofactor. Expressed in muscles and epithelial tissues including pharynx, intestine and hypodermis. Expressed in vulval and spermathecal seam cells.

The protein resides in the cytoplasm. It localises to the apical cell membrane. The catalysed reaction is L-seryl-[protein] + ATP = O-phospho-L-seryl-[protein] + ADP + H(+). It catalyses the reaction L-threonyl-[protein] + ATP = O-phospho-L-threonyl-[protein] + ADP + H(+). Phosphorylates yap-1 which may negatively regulate yap-1 nuclear localization. Plays an essential role in larval development. Regulates growth, the formation of gut granules, lifespan and cell and body sizes probably in synergy with the TGF-beta sma/mab pathway. Does not appear to regulate apoptosis and proliferation. In addition, may synergize with the TGF-beta daf-7 dauer pathway to regulate entry into the dauer stage. Maintains the cellular integrity of intestinal cells by regulating the localization of apical actin and junctional proteins. In Caenorhabditis elegans, this protein is Serine/threonine-protein kinase WARTS homolog.